The sequence spans 295 residues: Enolase-phosphatase E1 (295 aa).

Residues Asp-20 and Glu-22 each contribute to the Mg(2+) site. Substrate contacts are provided by residues 153–154 (SS) and Lys-187. Asp-212 serves as a coordination point for Mg(2+). A disordered region spans residues 260-295 (ETKEENGGATNGKRKIEETNDDVAEEDKAQVYPNKK).

This sequence belongs to the HAD-like hydrolase superfamily. MasA/MtnC family. Monomer. Mg(2+) is required as a cofactor.

Its subcellular location is the cytoplasm. It localises to the nucleus. It catalyses the reaction 5-methylsulfanyl-2,3-dioxopentyl phosphate + H2O = 1,2-dihydroxy-5-(methylsulfanyl)pent-1-en-3-one + phosphate. It functions in the pathway amino-acid biosynthesis; L-methionine biosynthesis via salvage pathway; L-methionine from S-methyl-5-thio-alpha-D-ribose 1-phosphate: step 3/6. The protein operates within amino-acid biosynthesis; L-methionine biosynthesis via salvage pathway; L-methionine from S-methyl-5-thio-alpha-D-ribose 1-phosphate: step 4/6. In terms of biological role, bifunctional enzyme that catalyzes the enolization of 2,3-diketo-5-methylthiopentyl-1-phosphate (DK-MTP-1-P) into the intermediate 2-hydroxy-3-keto-5-methylthiopentenyl-1-phosphate (HK-MTPenyl-1-P), which is then dephosphorylated to form the acireductone 1,2-dihydroxy-3-keto-5-methylthiopentene (DHK-MTPene). This chain is Enolase-phosphatase E1, found in Anopheles gambiae (African malaria mosquito).